The following is a 356-amino-acid chain: DNA-directed RNA polymerase subunit alpha (356 aa).

The interval 1 to 259 (MIKAAATLKS…KLMTACLTTL (259 aa)) is alpha N-terminal domain (alpha-NTD). The segment at 277–356 (FVQVNYNKME…STYGIELKED (80 aa)) is alpha C-terminal domain (alpha-CTD).

Belongs to the RNA polymerase alpha chain family. In terms of assembly, in plastids the minimal PEP RNA polymerase catalytic core is composed of four subunits: alpha, beta, beta', and beta''. When a (nuclear-encoded) sigma factor is associated with the core the holoenzyme is formed, which can initiate transcription.

It is found in the plastid. Its subcellular location is the chloroplast. It catalyses the reaction RNA(n) + a ribonucleoside 5'-triphosphate = RNA(n+1) + diphosphate. In terms of biological role, DNA-dependent RNA polymerase catalyzes the transcription of DNA into RNA using the four ribonucleoside triphosphates as substrates. The polypeptide is DNA-directed RNA polymerase subunit alpha (Ostreococcus tauri).